We begin with the raw amino-acid sequence, 548 residues long: Chaperonin GroEL (548 aa).

ATP-binding positions include 30-33, K51, 87-91, G415, 479-481, and D495; these read TLGP, DGTTT, and NAA.

Belongs to the chaperonin (HSP60) family. Forms a cylinder of 14 subunits composed of two heptameric rings stacked back-to-back. Interacts with the co-chaperonin GroES.

It localises to the cytoplasm. It carries out the reaction ATP + H2O + a folded polypeptide = ADP + phosphate + an unfolded polypeptide.. Its function is as follows. Together with its co-chaperonin GroES, plays an essential role in assisting protein folding. The GroEL-GroES system forms a nano-cage that allows encapsulation of the non-native substrate proteins and provides a physical environment optimized to promote and accelerate protein folding. In Nitratidesulfovibrio vulgaris (strain DSM 19637 / Miyazaki F) (Desulfovibrio vulgaris), this protein is Chaperonin GroEL.